A 314-amino-acid polypeptide reads, in one-letter code: Olfactory receptor 5P76 (314 aa).

The Extracellular segment spans residues 1-28; sequence MAFLEDGNHTAVTGFILLGLTDDPVLRV. An N-linked (GlcNAc...) asparagine glycan is attached at Asn8. A helical membrane pass occupies residues 29–49; sequence VLFVIILCIYLVTVSGNLSTI. At 50 to 57 the chain is on the cytoplasmic side; that stretch reads LLIRVSSQ. A helical transmembrane segment spans residues 58–78; it reads LHHPMYFFLSHLASADIGYSS. At 79 to 102 the chain is on the extracellular side; sequence SVTPNMLVNFLVERNTISYLGCGI. An intrachain disulfide couples Cys100 to Cys192. A helical transmembrane segment spans residues 103–123; the sequence is QLGSAVFFGTVECFLLAAMAY. Residues 124-136 lie on the Cytoplasmic side of the membrane; that stretch reads DRFIAICSPLLYS. Residues 137–157 form a helical membrane-spanning segment; sequence NKMSTQVCVQLLVGSYIGGFL. Topologically, residues 158–199 are extracellular; that stretch reads NASSFTLSFFSLVFCGPNRVNHFFCDFAPLVKLSCSDVSVPA. The helical transmembrane segment at 200-220 threads the bilayer; the sequence is VVPSFTAGSIIIVTIFVIAVS. The Cytoplasmic portion of the chain corresponds to 221–240; sequence YIYILITILKMRSTEGRQKA. A helical transmembrane segment spans residues 241 to 261; it reads FSTCTSHLTAVTLFYGTITFI. Residues 262–274 lie on the Extracellular side of the membrane; sequence YVMPKSSYSTDQN. A helical membrane pass occupies residues 275–295; that stretch reads KVVSVFYMVVVPMLNPLIYSL. The Cytoplasmic portion of the chain corresponds to 296–314; it reads RNKEIKGALKRQLAKNTFS.

This sequence belongs to the G-protein coupled receptor 1 family.

The protein localises to the cell membrane. Potential odorant receptor. In Mus musculus (Mouse), this protein is Olfactory receptor 5P76.